A 294-amino-acid chain; its full sequence is Cutinase (294 aa).

The N-terminal stretch at 1 to 33 is a signal peptide; it reads MLRARPSHRLASAAAVVAATGAALLAGSSPAAA. Cysteines 36 and 107 form a disulfide. Residue Ser-118 is the Nucleophile of the active site. An intrachain disulfide couples Cys-180 to Cys-187. Asp-184 is a catalytic residue. His-198 (proton donor/acceptor) is an active-site residue. A disordered region spans residues 222–241; sequence GTPTTPTPTPTPTPVPTTCV. A compositionally biased stretch (pro residues) spans 226 to 236; sequence TPTPTPTPTPV. Residues 240–294 are may be involved in substrate binding; sequence CVRDSTRDHVAADRAVSLYGRAYARGSRDSLGATSSYNVVSLQQVEGGWRLVTAC.

Belongs to the cutinase family.

The protein resides in the secreted. It carries out the reaction cutin + H2O = cutin monomers.. The catalysed reaction is a tetradecanoate ester + H2O = an aliphatic alcohol + tetradecanoate + H(+). The enzyme catalyses hexadecanoate ester + H2O = an aliphatic alcohol + hexadecanoate + H(+). It catalyses the reaction a butanoate ester + H2O = an aliphatic alcohol + butanoate + H(+). It carries out the reaction an octanoate ester + H2O = an aliphatic alcohol + octanoate + H(+). Its function is as follows. Catalyzes the hydrolysis of cutin, a polyester that forms the structure of plant cuticle. Shows esterase activity towards p-nitrophenol-linked aliphatic esters (pNP-aliphatic esters). Can depolymerize synthetic polyesters such as poly(epsilon-caprolactone) (PCL) and poly(1,3-propylene adipate) (PPA). Exhibits some activity on poly(lactic acid) (PLA). Can bind but not hydrolyze poly(hydroxybutyrate) (PHB). The polypeptide is Cutinase (Kineococcus radiotolerans (strain ATCC BAA-149 / DSM 14245 / SRS30216)).